Consider the following 338-residue polypeptide: Ketol-acid reductoisomerase (NADP(+)) (338 aa).

The KARI N-terminal Rossmann domain occupies 1-181; the sequence is MQVYYDKDCD…GGGRTGIIET (181 aa). Residues 24 to 27, arginine 47, serine 50, serine 52, and 82 to 85 contribute to the NADP(+) site; these read FGSQ and DEFQ. Histidine 107 is an active-site residue. Glycine 133 contributes to the NADP(+) binding site. A KARI C-terminal knotted domain is found at 182-327; it reads TFKDETETDL…EKLRSMMPWI (146 aa). Mg(2+)-binding residues include aspartate 190, glutamate 194, glutamate 226, and glutamate 230. Serine 251 contributes to the substrate binding site.

The protein belongs to the ketol-acid reductoisomerase family. Requires Mg(2+) as cofactor.

It carries out the reaction (2R)-2,3-dihydroxy-3-methylbutanoate + NADP(+) = (2S)-2-acetolactate + NADPH + H(+). The enzyme catalyses (2R,3R)-2,3-dihydroxy-3-methylpentanoate + NADP(+) = (S)-2-ethyl-2-hydroxy-3-oxobutanoate + NADPH + H(+). It participates in amino-acid biosynthesis; L-isoleucine biosynthesis; L-isoleucine from 2-oxobutanoate: step 2/4. It functions in the pathway amino-acid biosynthesis; L-valine biosynthesis; L-valine from pyruvate: step 2/4. Involved in the biosynthesis of branched-chain amino acids (BCAA). Catalyzes an alkyl-migration followed by a ketol-acid reduction of (S)-2-acetolactate (S2AL) to yield (R)-2,3-dihydroxy-isovalerate. In the isomerase reaction, S2AL is rearranged via a Mg-dependent methyl migration to produce 3-hydroxy-3-methyl-2-ketobutyrate (HMKB). In the reductase reaction, this 2-ketoacid undergoes a metal-dependent reduction by NADPH to yield (R)-2,3-dihydroxy-isovalerate. In Marinobacter nauticus (strain ATCC 700491 / DSM 11845 / VT8) (Marinobacter aquaeolei), this protein is Ketol-acid reductoisomerase (NADP(+)).